Consider the following 886-residue polypeptide: UPF0592 membrane protein C7D4.03c (886 aa).

Residues 87-112 (ILNEPYNESPSSSSSDSSSRSTSPFS) form a disordered region. The segment covering 95 to 112 (SPSSSSSDSSSRSTSPFS) has biased composition (low complexity). The next 3 helical transmembrane spans lie at 277–297 (FCAS…DHFL), 374–394 (GGFF…QFSF), and 400–420 (VIYF…LTIS).

This sequence belongs to the UPF0592 family.

Its subcellular location is the membrane. The polypeptide is UPF0592 membrane protein C7D4.03c (Schizosaccharomyces pombe (strain 972 / ATCC 24843) (Fission yeast)).